The following is a 248-amino-acid chain: Opiorphin prepropeptide (248 aa).

A signal peptide spans 1 to 21 (MKLTFFLGLLALISCFTPSES). Pyrrolidone carboxylic acid is present on Q22. Residues 150–198 (DTTITTNPPTTATATTSTSTKPTMTISSSTVPISSTPEPATSISAATPA) form a disordered region. N218 carries an N-linked (GlcNAc...) asparagine glycan.

Belongs to the PROL1/PROL3 family. In terms of tissue distribution, abundantly expressed in lacrimal gland where it found in the secretory endpieces. Also expressed at modest levels in the submandibular gland.

The protein resides in the secreted. Opiorphin is an endogenous inhibitor of neprilysin and aminopeptidase N. Inhibits the breakdown of substance P, Mca-BK2 and Met-enkephalin by neprilysin in vitro with IC(50) values of 29 uM, 33 uM and 33 uM respectively. Inhibits the breakdown of Ala-pNA by aminopeptidase N in vitro with an IC(50) of 65 uM. Has a potent analgesic effect when administered to rats by intravenous injection. The protein is Opiorphin prepropeptide of Homo sapiens (Human).